The following is a 201-amino-acid chain: MICOS complex subunit MIC27 (201 aa).

The transit peptide at 1–31 directs the protein to the mitochondrion; the sequence is MTQDKPIVETISNAGEQVTNVFGQFWQLVTS. Over 32–117 the chain is Cytoplasmic; it reads KNTTNNGDSK…KCNAYLTEEW (86 aa). The chain crosses the membrane as a helical span at residues 118-138; that stretch reads TALPKAAAITVGGMAGFVLGL. Topologically, residues 139–145 are mitochondrial intermembrane; sequence KRGPVGR. Residues 146-166 form a helical membrane-spanning segment; sequence LLTTTIGLATMAAFCYPIEAV. The Cytoplasmic segment spans residues 167 to 201; that stretch reads DVAKTGRAHAEQTWYSFQESPTPSAIVKTNLSPPK.

It belongs to the apolipoprotein O/MICOS complex subunit Mic27 family. As to quaternary structure, component of the mitochondrial contact site and cristae organizing system (MICOS) complex.

The protein resides in the mitochondrion outer membrane. Its function is as follows. Sustains mitochondrial morphology probably through maintaining cristae morphology. May act as a component of the MICOS complex, a large protein complex of the mitochondria. The polypeptide is MICOS complex subunit MIC27 (Caenorhabditis elegans).